The following is a 318-amino-acid chain: Beta-sarcoglycan (318 aa).

The tract at residues 1–32 (MAAAAAAAAEQQSSNGPVKKSMREKAVERRNV) is disordered. At 1–65 (MAAAAAAAAE…GLRGRKGNLA (65 aa)) the chain is on the cytoplasmic side. A compositionally biased stretch (basic and acidic residues) spans 21 to 32 (SMREKAVERRNV). A helical; Signal-anchor for type II membrane protein membrane pass occupies residues 66–86 (ICVIVLLFLLAVINLIITLVI). Residues 87 to 318 (WAVIRIGPNG…VSDNPCGNTH (232 aa)) are Extracellular-facing. N-linked (GlcNAc...) asparagine glycosylation is found at N158, N211, and N258. 2 disulfides stabilise this stretch: C288–C314 and C290–C307.

The protein belongs to the sarcoglycan beta/delta/gamma/zeta family. As to quaternary structure, cross-link to form 2 major subcomplexes: one consisting of SGCB, SGCD and SGCG and the other consisting of SGCB and SGCD. The association between SGCB and SGCG is particularly strong while SGCA is loosely associated with the other sarcoglycans. Disulfide bonds are present.

The protein localises to the cell membrane. It localises to the sarcolemma. The protein resides in the cytoplasm. Its subcellular location is the cytoskeleton. Functionally, component of the sarcoglycan complex, a subcomplex of the dystrophin-glycoprotein complex which forms a link between the F-actin cytoskeleton and the extracellular matrix. This chain is Beta-sarcoglycan (SGCB), found in Oryctolagus cuniculus (Rabbit).